The following is a 257-amino-acid chain: Cilia- and flagella-associated protein 300 (257 aa).

The protein belongs to the CFAP300 family.

The protein localises to the cytoplasm. Its subcellular location is the cytoskeleton. It localises to the flagellum axoneme. Its function is as follows. Cilium- and flagellum-specific protein that plays a role in axonemal structure organization and motility. Plays a role in outer and inner dynein arm assembly. The sequence is that of Cilia- and flagella-associated protein 300 from Chlamydomonas reinhardtii (Chlamydomonas smithii).